The sequence spans 112 residues: uncharacterized protein (112 aa).

Residues 75 to 95 (ILGVFGGFIYILTPLPIVSGF) form a helical membrane-spanning segment.

It is found in the membrane. This is an uncharacterized protein from Methanocaldococcus jannaschii (strain ATCC 43067 / DSM 2661 / JAL-1 / JCM 10045 / NBRC 100440) (Methanococcus jannaschii).